A 219-amino-acid chain; its full sequence is 7-cyano-7-deazaguanine synthase (219 aa).

Residue 10 to 20 (FSGGQDSTTCL) coordinates ATP. Residues cysteine 188, cysteine 196, cysteine 199, and cysteine 202 each coordinate Zn(2+).

Belongs to the QueC family. It depends on Zn(2+) as a cofactor.

It catalyses the reaction 7-carboxy-7-deazaguanine + NH4(+) + ATP = 7-cyano-7-deazaguanine + ADP + phosphate + H2O + H(+). The protein operates within purine metabolism; 7-cyano-7-deazaguanine biosynthesis. Its function is as follows. Catalyzes the ATP-dependent conversion of 7-carboxy-7-deazaguanine (CDG) to 7-cyano-7-deazaguanine (preQ(0)). This is 7-cyano-7-deazaguanine synthase from Neisseria meningitidis serogroup A / serotype 4A (strain DSM 15465 / Z2491).